We begin with the raw amino-acid sequence, 425 residues long: Riboflavin biosynthesis protein RibBA (425 aa).

The interval 1–204 (MTRLDSVERA…IADLIEWRRK (204 aa)) is DHBP synthase. D-ribulose 5-phosphate is bound by residues 28 to 29 (RE), D33, 141 to 145 (RPGHT), and E165. E29 is a Mg(2+) binding site. H144 is a binding site for Mg(2+). Residues 205–425 (HEKHIERIAE…HLPGEFGGAL (221 aa)) are GTP cyclohydrolase II. 259–263 (RVHSE) serves as a coordination point for GTP. 3 residues coordinate Zn(2+): C264, C275, and C277. GTP is bound by residues Q280, 303–305 (EGR), and T325. D337 acts as the Proton acceptor; for GTP cyclohydrolase activity in catalysis. Residue R339 is the Nucleophile; for GTP cyclohydrolase activity of the active site. Positions 360 and 365 each coordinate GTP.

In the N-terminal section; belongs to the DHBP synthase family. This sequence in the C-terminal section; belongs to the GTP cyclohydrolase II family. Mg(2+) serves as cofactor. Mn(2+) is required as a cofactor. Requires Zn(2+) as cofactor.

The catalysed reaction is D-ribulose 5-phosphate = (2S)-2-hydroxy-3-oxobutyl phosphate + formate + H(+). The enzyme catalyses GTP + 4 H2O = 2,5-diamino-6-hydroxy-4-(5-phosphoribosylamino)-pyrimidine + formate + 2 phosphate + 3 H(+). Its pathway is cofactor biosynthesis; riboflavin biosynthesis; 2-hydroxy-3-oxobutyl phosphate from D-ribulose 5-phosphate: step 1/1. The protein operates within cofactor biosynthesis; riboflavin biosynthesis; 5-amino-6-(D-ribitylamino)uracil from GTP: step 1/4. Functionally, catalyzes the conversion of D-ribulose 5-phosphate to formate and 3,4-dihydroxy-2-butanone 4-phosphate. Catalyzes the conversion of GTP to 2,5-diamino-6-ribosylamino-4(3H)-pyrimidinone 5'-phosphate (DARP), formate and pyrophosphate. This is Riboflavin biosynthesis protein RibBA from Mycobacterium avium (strain 104).